The following is an 84-amino-acid chain: ATP synthase subunit c (84 aa).

2 consecutive transmembrane segments (helical) span residues 9 to 29 (IIASAILLAVAALGTALGFAI) and 54 to 74 (IVAGLLDAISMIAVGIALLFI).

This sequence belongs to the ATPase C chain family. In terms of assembly, F-type ATPases have 2 components, F(1) - the catalytic core - and F(0) - the membrane proton channel. F(1) has five subunits: alpha(3), beta(3), gamma(1), delta(1), epsilon(1). F(0) has three main subunits: a(1), b(2) and c(10-14). The alpha and beta chains form an alternating ring which encloses part of the gamma chain. F(1) is attached to F(0) by a central stalk formed by the gamma and epsilon chains, while a peripheral stalk is formed by the delta and b chains.

Its subcellular location is the cell inner membrane. F(1)F(0) ATP synthase produces ATP from ADP in the presence of a proton or sodium gradient. F-type ATPases consist of two structural domains, F(1) containing the extramembraneous catalytic core and F(0) containing the membrane proton channel, linked together by a central stalk and a peripheral stalk. During catalysis, ATP synthesis in the catalytic domain of F(1) is coupled via a rotary mechanism of the central stalk subunits to proton translocation. Its function is as follows. Key component of the F(0) channel; it plays a direct role in translocation across the membrane. A homomeric c-ring of between 10-14 subunits forms the central stalk rotor element with the F(1) delta and epsilon subunits. This is ATP synthase subunit c from Pasteurella multocida (strain Pm70).